The chain runs to 232 residues: Ubiquinone biosynthesis O-methyltransferase (232 aa).

Residues arginine 36, glycine 55, aspartate 76, and methionine 120 each coordinate S-adenosyl-L-methionine.

Belongs to the methyltransferase superfamily. UbiG/COQ3 family.

It carries out the reaction a 3-demethylubiquinol + S-adenosyl-L-methionine = a ubiquinol + S-adenosyl-L-homocysteine + H(+). It catalyses the reaction a 3-(all-trans-polyprenyl)benzene-1,2-diol + S-adenosyl-L-methionine = a 2-methoxy-6-(all-trans-polyprenyl)phenol + S-adenosyl-L-homocysteine + H(+). The protein operates within cofactor biosynthesis; ubiquinone biosynthesis. Its function is as follows. O-methyltransferase that catalyzes the 2 O-methylation steps in the ubiquinone biosynthetic pathway. This Paraburkholderia xenovorans (strain LB400) protein is Ubiquinone biosynthesis O-methyltransferase.